Reading from the N-terminus, the 461-residue chain is Isthmin-1 (461 aa).

The first 26 residues, 1 to 26 (MVRLAAELLLLLGLLLLTLHITVLRS), serve as a signal peptide directing secretion. The N-linked (GlcNAc...) asparagine glycan is linked to asparagine 33. Residues 40 to 58 (QDSRVAENNVNADSSSSVQ) are compositionally biased toward polar residues. Disordered regions lie at residues 40–62 (QDSRVAENNVNADSSSSVQLGPG), 73–92 (ASQPWAQSPGTGGSLQRDGP), and 128–188 (EGSE…NFLK). The span at 131 to 141 (EPEKGMRKENK) shows a compositional bias: basic and acidic residues. Residues 156 to 165 (SSSSSSSSVS) show a composition bias toward low complexity. A TSP type-1 domain is found at 215 to 259 (DGEGDWSAWSPCSVSCGNGNQKRTRSCGYACTATESRTCDMPSCP). 3 disulfide bridges follow: cysteine 226-cysteine 253, cysteine 230-cysteine 258, and cysteine 241-cysteine 245. The N-linked (GlcNAc...) asparagine glycan is linked to asparagine 282. The AMOP domain occupies 286 to 449 (LFGVDTDSCE…QKCAENPQDE (164 aa)).

It belongs to the isthmin family.

The protein resides in the secreted. Functionally, may specifically influence certain angiogenesis process. The polypeptide is Isthmin-1 (ism1) (Danio rerio (Zebrafish)).